The primary structure comprises 148 residues: Large ribosomal subunit protein bL9 (148 aa).

This sequence belongs to the bacterial ribosomal protein bL9 family.

Its function is as follows. Binds to the 23S rRNA. This chain is Large ribosomal subunit protein bL9, found in Parabacteroides distasonis (strain ATCC 8503 / DSM 20701 / CIP 104284 / JCM 5825 / NCTC 11152).